Here is a 376-residue protein sequence, read N- to C-terminus: 28S rRNA (uridine-N(3))-methyltransferase (376 aa).

Disordered regions lie at residues 1-33 (MAERGRKRPCGPGEHGQRIEWRKWKQQKKEEKK) and 49-71 (AQEEQAKRLEEEEAAAEKEDRGR). Residues 15 to 33 (HGQRIEWRKWKQQKKEEKK) show a composition bias toward basic and acidic residues. S-adenosyl-L-homocysteine contacts are provided by T289, R292, G312, N341, and T342. Residues R292, G312, N341, and T342 each contribute to the S-adenosyl-L-methionine site.

Belongs to the class IV-like SAM-binding methyltransferase superfamily. In terms of assembly, interacts with INCA1.

It is found in the cytoplasm. The protein localises to the cytoskeleton. The protein resides in the spindle. It localises to the chromosome. Its subcellular location is the centromere. It is found in the kinetochore. The protein localises to the microtubule organizing center. The protein resides in the centrosome. It carries out the reaction uridine in 28S rRNA + S-adenosyl-L-methionine = N(3)-methyluridine in 28S rRNA + S-adenosyl-L-homocysteine + H(+). Its function is as follows. S-adenosyl-L-methionine-dependent methyltransferase that specifically methylates the N3 position of a uridine in 28S rRNA. Required for association of the centrosomes with the poles of the bipolar mitotic spindle during metaphase. Also involved in chromosome alignment. May promote centrosome maturation probably by recruiting A-kinase anchor protein AKAP9 to centrosomes in early mitosis. Binds specifically to miRNA MIR145 hairpin, regulates MIR145 expression at a postranscriptional level. The sequence is that of 28S rRNA (uridine-N(3))-methyltransferase from Homo sapiens (Human).